Consider the following 75-residue polypeptide: UPF0150 protein TM_1313 (75 aa).

Belongs to the UPF0150 family.

The protein is UPF0150 protein TM_1313 of Thermotoga maritima (strain ATCC 43589 / DSM 3109 / JCM 10099 / NBRC 100826 / MSB8).